We begin with the raw amino-acid sequence, 349 residues long: Ferredoxin--NADP reductase 1 (349 aa).

FAD contacts are provided by Glu36, Lys44, Tyr48, Val88, Leu123, Asp290, and Ser331.

The protein belongs to the ferredoxin--NADP reductase type 2 family. Homodimer. Requires FAD as cofactor.

The enzyme catalyses 2 reduced [2Fe-2S]-[ferredoxin] + NADP(+) + H(+) = 2 oxidized [2Fe-2S]-[ferredoxin] + NADPH. In Bacillus licheniformis (strain ATCC 14580 / DSM 13 / JCM 2505 / CCUG 7422 / NBRC 12200 / NCIMB 9375 / NCTC 10341 / NRRL NRS-1264 / Gibson 46), this protein is Ferredoxin--NADP reductase 1.